The primary structure comprises 689 residues: DNA ligase (689 aa).

NAD(+) is bound by residues 40 to 44, 89 to 90, and E122; these read DQEYD and SL. Catalysis depends on K124, which acts as the N6-AMP-lysine intermediate. Residues R145, E182, K300, and K325 each contribute to the NAD(+) site. Zn(2+) is bound by residues C419, C422, C437, and C442. The region spanning 600–689 is the BRCT domain; it reads QADGVLTGAT…SADASADASA (90 aa).

This sequence belongs to the NAD-dependent DNA ligase family. LigA subfamily. Requires Mg(2+) as cofactor. The cofactor is Mn(2+).

The catalysed reaction is NAD(+) + (deoxyribonucleotide)n-3'-hydroxyl + 5'-phospho-(deoxyribonucleotide)m = (deoxyribonucleotide)n+m + AMP + beta-nicotinamide D-nucleotide.. Functionally, DNA ligase that catalyzes the formation of phosphodiester linkages between 5'-phosphoryl and 3'-hydroxyl groups in double-stranded DNA using NAD as a coenzyme and as the energy source for the reaction. It is essential for DNA replication and repair of damaged DNA. The chain is DNA ligase from Gemmatimonas aurantiaca (strain DSM 14586 / JCM 11422 / NBRC 100505 / T-27).